Reading from the N-terminus, the 39-residue chain is Histone H2A (39 aa).

Residues 1–18 (AGRGKQGGKVRAKAKTRS) are compositionally biased toward basic residues. The tract at residues 1-24 (AGRGKQGGKVRAKAKTRSSRAGLQ) is disordered. K5 carries the post-translational modification N6-(2-hydroxyisobutyryl)lysine. K5 carries the N6-acetyllysine modification. Residue K9 is modified to N6-(2-hydroxyisobutyryl)lysine; alternate. At K9 the chain carries N6-lactoyllysine; alternate. Position 9 is an N6-succinyllysine (K9). Residues K13 and K15 each participate in a glycyl lysine isopeptide (Lys-Gly) (interchain with G-Cter in ubiquitin) cross-link. Position 36 is an N6-(2-hydroxyisobutyryl)lysine; alternate (K36).

It belongs to the histone H2A family. In terms of assembly, the nucleosome is a histone octamer containing two molecules each of H2A, H2B, H3 and H4 assembled in one H3-H4 heterotetramer and two H2A-H2B heterodimers. The octamer wraps approximately 147 bp of DNA. Monoubiquitination of C-terminus gives a specific tag for epigenetic transcriptional repression. Following DNA double-strand breaks (DSBs), it is ubiquitinated through 'Lys-63' linkage of ubiquitin moieties.

The protein resides in the nucleus. It localises to the chromosome. In terms of biological role, core component of nucleosome. Nucleosomes wrap and compact DNA into chromatin, limiting DNA accessibility to the cellular machineries which require DNA as a template. Histones thereby play a central role in transcription regulation, DNA repair, DNA replication and chromosomal stability. DNA accessibility is regulated via a complex set of post-translational modifications of histones, also called histone code, and nucleosome remodeling. Its function is as follows. Buforins are strong antimicrobial activities in vitro against a broad-spectrum of microorganisms including fungi. Buforin II is more potent than buforin I. The protein is Histone H2A of Bufo gargarizans (Asian toad).